A 343-amino-acid chain; its full sequence is MMNAVITSATINCNSLSPSWTCGDNSPSKLLLGEISAALSRRRTVKVSCGKSSPDDYHSTLKSLNSRGRFPRKSLGQHYMLNSDINDQLASAADVKEGDFVLEIGPGTGSLTNVLINLGATVLAIEKDPHMVDLVSERFAGSDKFKVLQEDFVKCHIRSHMLSILETRRLSHPDSALAKVVSNLPFNISTDVVKLLLPMGDIFSKVVLLLQDEAALRLVEPALRTSEYRPINILINFYSEPEYNFRVPRENFFPQPKVDAAVVTFKLKHPRDYPDVSSTKNFFSLVNSAFNGKRKMLRKSLQHISSSPDIEKALGVAGLPATSRPEELTLDDFVKLHNVIARE.

A chloroplast-targeting transit peptide spans 1–48 (MMNAVITSATINCNSLSPSWTCGDNSPSKLLLGEISAALSRRRTVKVS). S-adenosyl-L-methionine contacts are provided by His78, Met80, Gly105, Glu126, Asp151, and Asn183.

This sequence belongs to the class I-like SAM-binding methyltransferase superfamily. rRNA adenine N(6)-methyltransferase family.

Its subcellular location is the plastid. It localises to the chloroplast. In terms of biological role, required for methylation of the 3' adenosines in the small subunit of plastid rRNA. Essential for chloroplast biogenesis at low temperatures. The chain is Ribosomal RNA small subunit methyltransferase, chloroplastic from Arabidopsis thaliana (Mouse-ear cress).